The following is a 462-amino-acid chain: MSFRSIVRDFRDSFGTLSKRSFEVKISGFSGRHRGKSIGPSSELDDTPVVAQQSKWAGLPPELLRDVMKRLEEDDSNWPSRKDVVACASVCTTWRDMCKDIVRNPEFCGKLTFPVSLKQPGPRDGVIQCFIKRDKSKLTYHLYLCLSSAVLDETGKFLLSAKRSRRTTHTDYIISMDSKNISRSSSGYIGKLRSNFLGTKFIIYDTQPPYNARTLCSQERTSRRFSSRKVSPKVPTGCYPIVQVNYELNVLGTRGPRRMQCAMHSIPASAVEPGGIVPGQPKELLPRLFEESFRSMATSFSKYSITDHSTDFSSSRFSEFGGGALQGQEQEQDGDDVNKERPLVLRNKAPRWHEQLQCWCLNFRGRVTVASVKNFQLIAAAPQPSSGAASEPSQAGQAAQQQTQPSQPSSSSSSSSSNHDTVILQFGKVAKDMFTMDYRYPLSAFQAFAICLTSFDTKLACE.

The 56-residue stretch at Ser-54–Gly-109 folds into the F-box domain. Disordered regions lie at residues Phe-317–Asn-338 and Gln-383–Asn-418. A compositionally biased stretch (low complexity) spans Gln-383–Ser-417.

This sequence belongs to the TUB family. In terms of tissue distribution, ubiquitous.

This chain is Tubby-like F-box protein 7 (TULP7), found in Oryza sativa subsp. japonica (Rice).